A 474-amino-acid polypeptide reads, in one-letter code: tRNA-2-methylthio-N(6)-dimethylallyladenosine synthase (474 aa).

The MTTase N-terminal domain occupies 3–120; that stretch reads KKLHIKTWGC…LPEMINSVRG (118 aa). 6 residues coordinate [4Fe-4S] cluster: Cys-12, Cys-49, Cys-83, Cys-157, Cys-161, and Cys-164. The 233-residue stretch at 143–375 folds into the Radical SAM core domain; sequence RAEGPTAFVS…QERINQQAMA (233 aa). A TRAM domain is found at 378-441; the sequence is RRMLGTTQRI…PNSLRGKVVR (64 aa).

It belongs to the methylthiotransferase family. MiaB subfamily. Monomer. [4Fe-4S] cluster serves as cofactor.

Its subcellular location is the cytoplasm. The catalysed reaction is N(6)-dimethylallyladenosine(37) in tRNA + (sulfur carrier)-SH + AH2 + 2 S-adenosyl-L-methionine = 2-methylsulfanyl-N(6)-dimethylallyladenosine(37) in tRNA + (sulfur carrier)-H + 5'-deoxyadenosine + L-methionine + A + S-adenosyl-L-homocysteine + 2 H(+). Its function is as follows. Catalyzes the methylthiolation of N6-(dimethylallyl)adenosine (i(6)A), leading to the formation of 2-methylthio-N6-(dimethylallyl)adenosine (ms(2)i(6)A) at position 37 in tRNAs that read codons beginning with uridine. The polypeptide is tRNA-2-methylthio-N(6)-dimethylallyladenosine synthase (Escherichia coli (strain SMS-3-5 / SECEC)).